A 272-amino-acid chain; its full sequence is Peptidoglycolipid exporter Gap (272 aa).

Transmembrane regions (helical) follow at residues 5–25 (ILGL…ILLV), 36–56 (VVFW…PLFV), 79–99 (IEPF…VIAL), 171–191 (LWVA…VLLV), 206–226 (IIAV…TLLS), and 252–272 (ILLV…LGVI).

This sequence belongs to the peptidoglycolipid addressing protein (GAP) (TC 2.A.116) family.

The protein resides in the cell inner membrane. In terms of biological role, required for the transport of peptidoglycolipids (GPLs) to the cell surface. This is Peptidoglycolipid exporter Gap from Mycolicibacterium smegmatis (strain ATCC 700084 / mc(2)155) (Mycobacterium smegmatis).